A 341-amino-acid chain; its full sequence is Type II methyltransferase M.NgoPII (341 aa).

The SAM-dependent MTase C5-type domain maps to 12 to 341 (MKIISLFSGC…AAAIKKTLER (330 aa)). Residue Cys84 is part of the active site.

The protein belongs to the class I-like SAM-binding methyltransferase superfamily. C5-methyltransferase family.

The enzyme catalyses a 2'-deoxycytidine in DNA + S-adenosyl-L-methionine = a 5-methyl-2'-deoxycytidine in DNA + S-adenosyl-L-homocysteine + H(+). In terms of biological role, a methylase that recognizes the double-stranded sequence 5'-GGCC-3', methylates C-3 on both strands, and protects the DNA from cleavage by the NgoPII endonuclease. The polypeptide is Type II methyltransferase M.NgoPII (ngoPIIM) (Neisseria gonorrhoeae).